The sequence spans 438 residues: Phosphoribosylamine--glycine ligase (438 aa).

Residues 108–316 form the ATP-grasp domain; that stretch reads REFMERNNIP…LLEIAKGIVE (209 aa). ATP is bound at residue 135 to 194; sequence IDEYGKPVVVKPLGLTGGKGVKVVGYQLKDNEEAKEYAEHIIRKDGKVLIEERTDGVEFT. Mg(2+) contacts are provided by Gln-274, Glu-286, and Asn-288. Mn(2+) is bound by residues Gln-274, Glu-286, and Asn-288.

The protein belongs to the GARS family. Mg(2+) is required as a cofactor. The cofactor is Mn(2+).

The catalysed reaction is 5-phospho-beta-D-ribosylamine + glycine + ATP = N(1)-(5-phospho-beta-D-ribosyl)glycinamide + ADP + phosphate + H(+). The protein operates within purine metabolism; IMP biosynthesis via de novo pathway; N(1)-(5-phospho-D-ribosyl)glycinamide from 5-phospho-alpha-D-ribose 1-diphosphate: step 2/2. The chain is Phosphoribosylamine--glycine ligase from Pyrococcus horikoshii (strain ATCC 700860 / DSM 12428 / JCM 9974 / NBRC 100139 / OT-3).